Here is a 599-residue protein sequence, read N- to C-terminus: Exocyst complex component EXO70B2 (599 aa).

Positions 38–58 (GASGNRGGDPRPTPSRGGSNV) are disordered.

It belongs to the EXO70 family. As to quaternary structure, self interacts. Interacts with EXO70B1. Interacts with the exocyst subunits EXO70H1, SEC5A and SEC15B. Binds to SNAP33. Subunit of the exocyst complex that mediates vesicle tethering during exocytosis. Binds to PUB22. Target of the E3 ubiquitin-protein ligase PUB22 that mediates its ubiquitination and degradation via the 26S proteasome to attenuate pathogen-associated molecular patterns (PAMP)-induced signaling, especially is response to the bacterial elicitor flg22. Mostly expressed in leaves and, to a lower extent, in roots, cotyledons, internodes, flower buds, siliques and anthers.

It localises to the cytoplasmic vesicle. The protein localises to the phagosome. It is found in the cytoplasm. Its subcellular location is the nucleus. Component of an exocyst subcomplex specifically involved in autophagy-related, Golgi-independent membrane traffic to the vacuole. Regulates autophagosome formation and autophagy-related Golgi-independent import into the vacuole. Positive regulator of defense responses to pathogenic bacteria (e.g. P.syringae pv. maculicola), to the biotrophic oomycete H.arabidopsidis and to fungi (e.g. B.graminis hordei), especially in cell wall apposition formation related to plant defense. Required for both immediate and later responses triggered by pathogen-associated molecular patterns (PAMPs). Positive regulator of abscisic acid (ABA)-independent mannitol (drought)-promoted stomatal closure. The sequence is that of Exocyst complex component EXO70B2 from Arabidopsis thaliana (Mouse-ear cress).